Reading from the N-terminus, the 403-residue chain is Large ribosomal subunit protein uL3 (403 aa).

Positions 1–37 (MSHRKFSAPRHGSLGFLPRKRSSRHRGKVKSFPKDDP) are disordered. Phosphoserine is present on Ser13. The segment covering 18–31 (PRKRSSRHRGKVKS) has biased composition (basic residues). Residue Lys39 forms a Glycyl lysine isopeptide (Lys-Gly) (interchain with G-Cter in SUMO2) linkage. At Lys136 the chain carries N6-acetyllysine. Residues Lys224 and Lys226 each participate in a glycyl lysine isopeptide (Lys-Gly) (interchain with G-Cter in SUMO2) cross-link. His245 is modified (tele-methylhistidine). An N6-acetyllysine; alternate mark is found at Lys286 and Lys294. A Glycyl lysine isopeptide (Lys-Gly) (interchain with G-Cter in SUMO2); alternate cross-link involves residue Lys286. Lys294 participates in a covalent cross-link: Glycyl lysine isopeptide (Lys-Gly) (interchain with G-Cter in SUMO1); alternate. Phosphoserine is present on Ser304. Lys366 is subject to N6-acetyllysine; alternate. A Glycyl lysine isopeptide (Lys-Gly) (interchain with G-Cter in SUMO2); alternate cross-link involves residue Lys366. Lys373 bears the N6-acetyllysine mark. Glycyl lysine isopeptide (Lys-Gly) (interchain with G-Cter in SUMO2) cross-links involve residues Lys386, Lys393, and Lys399.

Belongs to the universal ribosomal protein uL3 family. Component of the large ribosomal subunit. Interacts with DHX33. In terms of processing, constitutively monomethylated at His-245 by METTL18. Methylation at His-245 regulates translation elongation by slowing ribosome traversal on tyrosine codons: slower elongation provides enough time for proper folding of synthesized proteins and prevents cellular aggregation of tyrosine-rich proteins. It is not required for incorporation of RPL3 into ribosomes.

Its subcellular location is the nucleus. It is found in the nucleolus. The protein localises to the cytoplasm. Its function is as follows. Component of the large ribosomal subunit. The ribosome is a large ribonucleoprotein complex responsible for the synthesis of proteins in the cell. The sequence is that of Large ribosomal subunit protein uL3 (Rpl3) from Rattus norvegicus (Rat).